The following is a 458-amino-acid chain: Putative long chain fatty acid-CoA ligase VraA (458 aa).

It belongs to the ATP-dependent AMP-binding enzyme family.

In Staphylococcus aureus (strain Mu3 / ATCC 700698), this protein is Putative long chain fatty acid-CoA ligase VraA (vraA).